The following is a 386-amino-acid chain: Beta-citrylglutamate synthase B (386 aa).

Positions 119–304 (FQELAGHGVP…VAGIIADYAA (186 aa)) constitute an ATP-grasp domain. Residues Lys158, 193 to 203 (QKYVKESHGRD), and Arg219 contribute to the ATP site. Asp264, Glu277, and Asn279 together coordinate Mg(2+). Residues Asp264, Glu277, and Asn279 each coordinate Mn(2+). The disordered stretch occupies residues 325–359 (ASETSEPELGPPASTAVDNMSASSSSVDSDPESTE). Over residues 338–352 (STAVDNMSASSSSVD) the composition is skewed to low complexity.

The protein belongs to the RimK family. Requires Mg(2+) as cofactor. Mn(2+) serves as cofactor.

It is found in the cytoplasm. The catalysed reaction is citrate + L-glutamate + ATP = beta-citrylglutamate + ADP + phosphate + H(+). It catalyses the reaction N-acetyl-L-aspartate + L-glutamate + ATP = N-acetyl-L-aspartyl-L-glutamate + ADP + phosphate + H(+). Functionally, catalyzes the synthesis of beta-citryl-L-glutamate and N-acetyl-L-aspartyl-L-glutamate. Beta-citryl-L-glutamate is synthesized more efficiently than N-acetyl-L-aspartyl-L-glutamate. This chain is Beta-citrylglutamate synthase B (RIMKLB), found in Homo sapiens (Human).